The chain runs to 206 residues: MPKIGMEPLRRKALVDAALRTIGHHGSLNVTMSDIAREAGVSAALAHHYFGSKQQLLLETIRSLLRDLRRDAVAALIRASGPREKLSAIVHVSFQSDQFTPETVAAWLAFYVEAQRSEETRRLLVIYSRRLRSNLMASLNRLCPPDDAARIAEGAAALIDGLYIRHSLRSAPLGLASAPALVEDYFDMQLKSFPDGQRAKPSIRTL.

One can recognise an HTH tetR-type domain in the interval 8–68 (PLRRKALVDA…ETIRSLLRDL (61 aa)). A DNA-binding region (H-T-H motif) is located at residues 31 to 50 (TMSDIAREAGVSAALAHHYF).

The protein operates within amine and polyamine biosynthesis; betaine biosynthesis via choline pathway [regulation]. Repressor involved in the biosynthesis of the osmoprotectant glycine betaine. It represses transcription of the choline transporter BetT and the genes of BetAB involved in the synthesis of glycine betaine. The protein is HTH-type transcriptional regulator BetI of Agrobacterium fabrum (strain C58 / ATCC 33970) (Agrobacterium tumefaciens (strain C58)).